Here is a 356-residue protein sequence, read N- to C-terminus: S-adenosylmethionine:tRNA ribosyltransferase-isomerase (356 aa).

Belongs to the QueA family. Monomer.

It is found in the cytoplasm. The catalysed reaction is 7-aminomethyl-7-carbaguanosine(34) in tRNA + S-adenosyl-L-methionine = epoxyqueuosine(34) in tRNA + adenine + L-methionine + 2 H(+). Its pathway is tRNA modification; tRNA-queuosine biosynthesis. Transfers and isomerizes the ribose moiety from AdoMet to the 7-aminomethyl group of 7-deazaguanine (preQ1-tRNA) to give epoxyqueuosine (oQ-tRNA). The polypeptide is S-adenosylmethionine:tRNA ribosyltransferase-isomerase (Nitrosospira multiformis (strain ATCC 25196 / NCIMB 11849 / C 71)).